The chain runs to 550 residues: Hydroxylamine reductase (550 aa).

[2Fe-2S] cluster contacts are provided by C3, C6, C18, and C25. Residues H249, E273, C317, C405, C433, C458, E492, and K494 each coordinate hybrid [4Fe-2O-2S] cluster. Residue C405 is modified to Cysteine persulfide.

It belongs to the HCP family. The cofactor is [2Fe-2S] cluster. Hybrid [4Fe-2O-2S] cluster is required as a cofactor.

The protein resides in the cytoplasm. It catalyses the reaction A + NH4(+) + H2O = hydroxylamine + AH2 + H(+). Functionally, catalyzes the reduction of hydroxylamine to form NH(3) and H(2)O. The sequence is that of Hydroxylamine reductase from Salmonella gallinarum (strain 287/91 / NCTC 13346).